The following is a 142-amino-acid chain: MNFTVPVQAIQSIWSVGKESDDAIAEACKPPFCIYFSKKTPYTVTNGSNADHGDDEVRQMMRGLLYNSSCISAQGHTPLALYSTAMLYPPMYGSCPQYVKLFDGSGSESVDVISSSYFVATWVLLVVVIILVFIIISFCISN.

At 1 to 117 the chain is on the virion surface side; that stretch reads MNFTVPVQAI…ESVDVISSSY (117 aa). An N-linked (GlcNAc...) asparagine; by host glycan is attached at Asn2. Cysteines 28 and 33 form a disulfide. N-linked (GlcNAc...) asparagine; by host glycans are attached at residues Asn46 and Asn67. A disulfide bridge links Cys70 with Cys95. The chain crosses the membrane as a helical span at residues 118-138; it reads FVATWVLLVVVIILVFIIISF. Residues 139 to 142 lie on the Intravirion side of the membrane; sequence CISN.

The protein belongs to the influenza type C/coronaviruses hemagglutinin-esterase family. In terms of assembly, homodimer. In terms of processing, N-glycosylated.

The protein localises to the virion membrane. Its subcellular location is the host cell membrane. This is Truncated non-functional hemagglutinin-esterase homolog (HE) from Berne virus (BEV).